Here is a 364-residue protein sequence, read N- to C-terminus: Very-long-chain (3R)-3-hydroxyacyl-CoA dehydratase 3 (364 aa).

At 1–151 the chain is on the cytoplasmic side; sequence MAMENQVLTP…ETLTNLRKGY (151 aa). Residues 7 to 96 enclose the CS domain; sequence VLTPHVYWAQ…KVSQWWERLT (90 aa). Residue Thr9 is modified to Phosphothreonine. Residues 113 to 138 are a coiled coil; sequence LDESDAEMELRAKEEERLNKLRLESE. Phosphoserine is present on residues Ser116 and Ser137. The chain crosses the membrane as a helical span at residues 152–172; that stretch reads LFMYNLVQFLGFSWIFVNLTV. The Lumenal segment spans residues 173–191; it reads RFCILGKESFYDTFHTVAD. Residues 192–212 form a helical membrane-spanning segment; sequence MMYFCQMLAVVETINAAIGVT. Residues 213-214 lie on the Cytoplasmic side of the membrane; it reads TS. Residues 215-235 form a helical membrane-spanning segment; the sequence is PVLPSLIQLLGRNFILFIIFG. Residues 236–244 are Lumenal-facing; sequence TMEEMQNKA. A helical transmembrane segment spans residues 245–265; it reads VVFFVFYLWSAIEIFRYSFYM. Residues 266-282 lie on the Cytoplasmic side of the membrane; the sequence is LTCIDMDWEVLTWLRYT. A helical membrane pass occupies residues 283 to 303; it reads LWIPLYPLGCLAEAVSVVQSI. Catalysis depends on residues Tyr288 and Glu295. Over 304-324 the chain is Lumenal; the sequence is PIFNETGRFSFTLPYPVKIKV. A helical membrane pass occupies residues 325–345; sequence RFSFFLQIYLIMIFLGLYINF. Topologically, residues 346-364 are cytoplasmic; the sequence is RHLYKQRRRRYGQKKKKIH.

It belongs to the very long-chain fatty acids dehydratase HACD family. May interact with enzymes of the ELO family (including ELOVL1); with those enzymes that mediate condensation, the first of the four steps of the reaction cycle responsible for fatty acids elongation, may be part of a larger fatty acids elongase complex. Interacts with RAC1.

The protein resides in the endoplasmic reticulum membrane. The catalysed reaction is a very-long-chain (3R)-3-hydroxyacyl-CoA = a very-long-chain (2E)-enoyl-CoA + H2O. It carries out the reaction (3R)-hydroxyhexadecanoyl-CoA = (2E)-hexadecenoyl-CoA + H2O. The protein operates within lipid metabolism; fatty acid biosynthesis. In terms of biological role, catalyzes the third of the four reactions of the long-chain fatty acids elongation cycle. This endoplasmic reticulum-bound enzymatic process, allows the addition of two carbons to the chain of long- and very long-chain fatty acids/VLCFAs per cycle. This enzyme catalyzes the dehydration of the 3-hydroxyacyl-CoA intermediate into trans-2,3-enoyl-CoA, within each cycle of fatty acid elongation. Thereby, it participates in the production of VLCFAs of different chain lengths that are involved in multiple biological processes as precursors of membrane lipids and lipid mediators. Involved in Rac1-signaling pathways leading to the modulation of gene expression. The polypeptide is Very-long-chain (3R)-3-hydroxyacyl-CoA dehydratase 3 (Pongo abelii (Sumatran orangutan)).